The sequence spans 491 residues: Probable glycine dehydrogenase (decarboxylating) subunit 2 (491 aa).

K264 carries the N6-(pyridoxal phosphate)lysine modification.

This sequence belongs to the GcvP family. C-terminal subunit subfamily. As to quaternary structure, the glycine cleavage system is composed of four proteins: P, T, L and H. In this organism, the P 'protein' is a heterodimer of two subunits. The cofactor is pyridoxal 5'-phosphate.

The catalysed reaction is N(6)-[(R)-lipoyl]-L-lysyl-[glycine-cleavage complex H protein] + glycine + H(+) = N(6)-[(R)-S(8)-aminomethyldihydrolipoyl]-L-lysyl-[glycine-cleavage complex H protein] + CO2. The glycine cleavage system catalyzes the degradation of glycine. The P protein binds the alpha-amino group of glycine through its pyridoxal phosphate cofactor; CO(2) is released and the remaining methylamine moiety is then transferred to the lipoamide cofactor of the H protein. This chain is Probable glycine dehydrogenase (decarboxylating) subunit 2, found in Coxiella burnetii (strain CbuK_Q154) (Coxiella burnetii (strain Q154)).